Here is a 563-residue protein sequence, read N- to C-terminus: Dihydroxy-acid dehydratase (563 aa).

D79 serves as a coordination point for Mg(2+). C120 serves as a coordination point for [2Fe-2S] cluster. Positions 121 and 122 each coordinate Mg(2+). An N6-carboxylysine modification is found at K122. C193 contributes to the [2Fe-2S] cluster binding site. E451 contacts Mg(2+). S477 serves as the catalytic Proton acceptor.

It belongs to the IlvD/Edd family. As to quaternary structure, homodimer. [2Fe-2S] cluster serves as cofactor. It depends on Mg(2+) as a cofactor.

It carries out the reaction (2R)-2,3-dihydroxy-3-methylbutanoate = 3-methyl-2-oxobutanoate + H2O. The catalysed reaction is (2R,3R)-2,3-dihydroxy-3-methylpentanoate = (S)-3-methyl-2-oxopentanoate + H2O. It functions in the pathway amino-acid biosynthesis; L-isoleucine biosynthesis; L-isoleucine from 2-oxobutanoate: step 3/4. The protein operates within amino-acid biosynthesis; L-valine biosynthesis; L-valine from pyruvate: step 3/4. Functionally, functions in the biosynthesis of branched-chain amino acids. Catalyzes the dehydration of (2R,3R)-2,3-dihydroxy-3-methylpentanoate (2,3-dihydroxy-3-methylvalerate) into 2-oxo-3-methylpentanoate (2-oxo-3-methylvalerate) and of (2R)-2,3-dihydroxy-3-methylbutanoate (2,3-dihydroxyisovalerate) into 2-oxo-3-methylbutanoate (2-oxoisovalerate), the penultimate precursor to L-isoleucine and L-valine, respectively. This Sulfurovum sp. (strain NBC37-1) protein is Dihydroxy-acid dehydratase.